The sequence spans 1505 residues: Probable RNA-directed RNA polymerase (1505 aa).

The protein belongs to the totiviridae RNA-directed RNA polymerase family.

The catalysed reaction is RNA(n) + a ribonucleoside 5'-triphosphate = RNA(n+1) + diphosphate. Its function is as follows. RNA-dependent RNA polymerase which replicates the viral genome. Catalyzes the transcription of fully conservative plus-strand genomic RNAs that are extruded from the virion into the cytoplasm where they function as mRNAs for translation of viral proteins and also as substrates for encapsidation to form new virions. Once encapsidated, the positive strand is converted to dsRNA by the RNA-directed RNA polymerase. Displays ssRNA-binding activity. This Saccharomyces cerevisiae virus L-A (ScV-L-A) protein is Probable RNA-directed RNA polymerase (gag-pol).